The chain runs to 678 residues: uncharacterized protein (678 aa).

2 helical membrane passes run 14–34 and 180–200; these read LMFA…WTGL and GAVI…IGGF.

Belongs to the mycobacterial PPE family.

It is found in the cell membrane. This is an uncharacterized protein from Mycobacterium tuberculosis (strain CDC 1551 / Oshkosh).